The chain runs to 125 residues: Small ribosomal subunit protein eS6 (125 aa).

This sequence belongs to the eukaryotic ribosomal protein eS6 family.

The protein is Small ribosomal subunit protein eS6 of Pyrococcus horikoshii (strain ATCC 700860 / DSM 12428 / JCM 9974 / NBRC 100139 / OT-3).